The primary structure comprises 178 residues: Extracellular fatty acid-binding protein (178 aa).

A signal peptide spans 1-20; it reads MRTLALSLALALLCLLHTEA. Blocked amino end (Ala) is present on alanine 21. An enterobactin-binding site is contributed by threonine 43. 1-tetradecanoyl-sn-glycerol 3-phosphate is bound by residues tyrosine 72 and lysine 104. The cysteines at positions 80 and 173 are disulfide-linked. 3 residues coordinate enterobactin: lysine 104, arginine 123, and arginine 134. 134-136 contacts 1-tetradecanoyl-sn-glycerol 3-phosphate; the sequence is RLY.

Belongs to the calycin superfamily. Lipocalin family. In terms of assembly, monomer. In terms of processing, does not seem to be glycosylated. As to expression, expressed in egg white (at protein level). Expressed in the magnum of the oviduct (at protein level). Preferentially synthesized in nonproliferating cells.

It localises to the secreted. Siderocalin-like lipocalin tightly binding a variety of bacterial ferric siderophores, also binds long-chain unsaturated fatty acids such as linoleic acid, oleic acid, arachidonic acid and, with a lower affinity, long chain saturated fatty acids such as steraic acid. May act as an antibacterial factor, through dual ligand specificity, both as a siderophore-sequestrating molecule and a lysophosphatidic acid (LPA) sensor. The protein is Extracellular fatty acid-binding protein (EXFABP) of Gallus gallus (Chicken).